The following is a 318-amino-acid chain: Elongator complex protein 5 (318 aa).

Phosphoserine is present on S270.

Belongs to the ELP5 family. As to quaternary structure, component of the elongator complex which consists of ELP1, ELP2, ELP3, ELP4, ELP5 and ELP6; in the complex, is required for optimal binding of ELP3 to ELP4. Tyrosine-phosphorylated.

It localises to the nucleus. It is found in the cytoplasm. It functions in the pathway tRNA modification; 5-methoxycarbonylmethyl-2-thiouridine-tRNA biosynthesis. Functionally, component of the elongator complex which is required for multiple tRNA modifications, including mcm5U (5-methoxycarbonylmethyl uridine), mcm5s2U (5-methoxycarbonylmethyl-2-thiouridine), and ncm5U (5-carbamoylmethyl uridine). The elongator complex catalyzes the formation of carboxymethyluridine in the wobble base at position 34 in tRNAs. Involved in cell migration. The sequence is that of Elongator complex protein 5 (Elp5) from Rattus norvegicus (Rat).